A 288-amino-acid polypeptide reads, in one-letter code: Acetyl-coenzyme A carboxylase carboxyl transferase subunit beta (288 aa).

Positions 34 to 288 constitute a CoA carboxyltransferase N-terminal domain; sequence LFAKCPACKH…HLVAFHGGVS (255 aa). 4 residues coordinate Zn(2+): C38, C41, C56, and C59. The C4-type zinc-finger motif lies at 38–59; it reads CPACKHMIYQKDLGPAKICPTC.

It belongs to the AccD/PCCB family. As to quaternary structure, acetyl-CoA carboxylase is a heterohexamer composed of biotin carboxyl carrier protein (AccB), biotin carboxylase (AccC) and two subunits each of ACCase subunit alpha (AccA) and ACCase subunit beta (AccD). It depends on Zn(2+) as a cofactor.

The protein resides in the cytoplasm. The enzyme catalyses N(6)-carboxybiotinyl-L-lysyl-[protein] + acetyl-CoA = N(6)-biotinyl-L-lysyl-[protein] + malonyl-CoA. Its pathway is lipid metabolism; malonyl-CoA biosynthesis; malonyl-CoA from acetyl-CoA: step 1/1. In terms of biological role, component of the acetyl coenzyme A carboxylase (ACC) complex. Biotin carboxylase (BC) catalyzes the carboxylation of biotin on its carrier protein (BCCP) and then the CO(2) group is transferred by the transcarboxylase to acetyl-CoA to form malonyl-CoA. The sequence is that of Acetyl-coenzyme A carboxylase carboxyl transferase subunit beta from Streptococcus equi subsp. zooepidemicus (strain MGCS10565).